Reading from the N-terminus, the 86-residue chain is Small ribosomal subunit protein bS20 (86 aa).

A compositionally biased stretch (basic residues) spans 1-27 (MANSKSAKKRATQAERRRQHNASRRSM). Residues 1-28 (MANSKSAKKRATQAERRRQHNASRRSMM) are disordered.

The protein belongs to the bacterial ribosomal protein bS20 family.

Binds directly to 16S ribosomal RNA. This Aliivibrio fischeri (strain MJ11) (Vibrio fischeri) protein is Small ribosomal subunit protein bS20.